Consider the following 525-residue polypeptide: Mitochondrial-processing peptidase subunit alpha (525 aa).

The transit peptide at 1–33 (MAAVVLAATRLLRGSGSWGCSRLRFGPPAYRRF) directs the protein to the mitochondrion. K64 carries the post-translational modification N6-succinyllysine. K299 bears the N6-acetyllysine mark.

The protein belongs to the peptidase M16 family. In terms of assembly, heterodimer of PMPCA (alpha) and PMPCB (beta) subunits, forming the mitochondrial processing protease (MPP) in which PMPCA is involved in substrate recognition and binding and PMPCB is the catalytic subunit. In terms of tissue distribution, ubiquitously expressed with highest expression in fetal tissues and adult brain, cerebellum and cerebellar vermis.

It is found in the mitochondrion matrix. The protein resides in the mitochondrion inner membrane. Functionally, substrate recognition and binding subunit of the essential mitochondrial processing protease (MPP), which cleaves the mitochondrial sequence off newly imported precursors proteins. The chain is Mitochondrial-processing peptidase subunit alpha (PMPCA) from Homo sapiens (Human).